A 109-amino-acid chain; its full sequence is MPLYEFTFIAQQGLTQYELEGLVKGLSSLLTKNGAELLKYEYWGLLDFAYAIDKMNKGHYCMMYIRSSSTSMDEFKRKVRLNEDVLRFLCLKRDKLPEGDSLMVQASQA.

This sequence belongs to the bacterial ribosomal protein bS6 family.

Binds together with bS18 to 16S ribosomal RNA. This Ehrlichia ruminantium (strain Gardel) protein is Small ribosomal subunit protein bS6.